Reading from the N-terminus, the 336-residue chain is MKDRYILAVESSCDETSVAILKNDKELLANIIASQVESHKRFGGVVPEVASRHHVEVVTTCFEDALQEAGIVASDLDAVAVTYGPGLVGALLVGMAAAKAFAWANKLPLIPINHMAGHLMAARDVKELQYPLLALLVSGGHTELVYVSEPGDYKIVGETRDDAVGEAYDKVGRVMGLTYPAGREIDQLAHKGQDTYHFPRAMIKEDHLEFSFSGLKSAFINLHHNAEQKGEALVLEDLCASFQAAVLDILLAKTQKALLKYPVKTLVVAGGVAANQGLRERLATDISPDIDVVIPPLRLCGDNAGMIALAAAIEFEKENFASLKLNAKPSLAFESL.

Histidine 114 and histidine 118 together coordinate Fe cation. Residues 136-140 (LVSGG), aspartate 169, glycine 182, aspartate 186, and asparagine 275 each bind substrate. Fe cation is bound at residue aspartate 302.

This sequence belongs to the KAE1 / TsaD family. Fe(2+) is required as a cofactor.

The protein localises to the cytoplasm. It catalyses the reaction L-threonylcarbamoyladenylate + adenosine(37) in tRNA = N(6)-L-threonylcarbamoyladenosine(37) in tRNA + AMP + H(+). In terms of biological role, required for the formation of a threonylcarbamoyl group on adenosine at position 37 (t(6)A37) in tRNAs that read codons beginning with adenine. Is involved in the transfer of the threonylcarbamoyl moiety of threonylcarbamoyl-AMP (TC-AMP) to the N6 group of A37, together with TsaE and TsaB. TsaD likely plays a direct catalytic role in this reaction. The chain is tRNA N6-adenosine threonylcarbamoyltransferase from Streptococcus agalactiae serotype V (strain ATCC BAA-611 / 2603 V/R).